The primary structure comprises 350 residues: Ferrochelatase (350 aa).

Residues histidine 220 and glutamate 301 each contribute to the Fe cation site.

It belongs to the ferrochelatase family.

The protein localises to the cytoplasm. It carries out the reaction heme b + 2 H(+) = protoporphyrin IX + Fe(2+). It functions in the pathway porphyrin-containing compound metabolism; protoheme biosynthesis; protoheme from protoporphyrin-IX: step 1/1. Functionally, catalyzes the ferrous insertion into protoporphyrin IX. The chain is Ferrochelatase from Brucella anthropi (strain ATCC 49188 / DSM 6882 / CCUG 24695 / JCM 21032 / LMG 3331 / NBRC 15819 / NCTC 12168 / Alc 37) (Ochrobactrum anthropi).